The following is a 425-amino-acid chain: UDP-N-acetylglucosamine 1-carboxyvinyltransferase (425 aa).

23–24 (KN) contacts phosphoenolpyruvate. R100 is a UDP-N-acetyl-alpha-D-glucosamine binding site. C124 (proton donor) is an active-site residue. The residue at position 124 (C124) is a 2-(S-cysteinyl)pyruvic acid O-phosphothioketal. 2 residues coordinate UDP-N-acetyl-alpha-D-glucosamine: D313 and I335.

Belongs to the EPSP synthase family. MurA subfamily.

It localises to the cytoplasm. It carries out the reaction phosphoenolpyruvate + UDP-N-acetyl-alpha-D-glucosamine = UDP-N-acetyl-3-O-(1-carboxyvinyl)-alpha-D-glucosamine + phosphate. The protein operates within cell wall biogenesis; peptidoglycan biosynthesis. In terms of biological role, cell wall formation. Adds enolpyruvyl to UDP-N-acetylglucosamine. The polypeptide is UDP-N-acetylglucosamine 1-carboxyvinyltransferase (Wolbachia sp. subsp. Brugia malayi (strain TRS)).